Consider the following 138-residue polypeptide: Basic phospholipase A2 Sct-N6 (138 aa).

A signal peptide spans 1–16; it reads MRTFWIVAVLLVGVEG. Disulfide bonds link cysteine 42–cysteine 131, cysteine 44–cysteine 60, cysteine 59–cysteine 111, cysteine 65–cysteine 138, cysteine 66–cysteine 104, cysteine 73–cysteine 97, and cysteine 91–cysteine 102. Ca(2+) contacts are provided by tyrosine 43, glycine 45, and glycine 47. Histidine 63 is a catalytic residue. Residue aspartate 64 coordinates Ca(2+). Aspartate 105 is a catalytic residue.

The protein belongs to the phospholipase A2 family. Group II subfamily. D49 sub-subfamily. It depends on Ca(2+) as a cofactor. As to expression, expressed by the venom gland.

It localises to the secreted. It carries out the reaction a 1,2-diacyl-sn-glycero-3-phosphocholine + H2O = a 1-acyl-sn-glycero-3-phosphocholine + a fatty acid + H(+). Functionally, snake venom phospholipase A2 (PLA2) that displays edema-inducing activities, as well as presynaptic neurotoxicity and low myotoxicity. PLA2 catalyzes the calcium-dependent hydrolysis of the 2-acyl groups in 3-sn-phosphoglycerides. This chain is Basic phospholipase A2 Sct-N6, found in Sistrurus tergeminus (Western massasauga).